A 448-amino-acid chain; its full sequence is Death-associated protein kinase 3 (448 aa).

Residues 13–275 (YEMGEELGSG…IAQSLEHSWI (263 aa)) form the Protein kinase domain. Residues 19-27 (LGSGQFAIV) and K42 contribute to the ATP site. D139 acts as the Proton acceptor in catalysis. The segment at 161–204 (DFGIAHRIEAGSEFKNIFGTPEFVAPEIVNYEPLGLEADMWSIG) is activation segment. Phosphothreonine occurs at positions 180 and 225. A Phosphothreonine; by autocatalysis modification is found at T265. The residue at position 265 (T265) is a Phosphothreonine; by ROCK1. Residue S304 is modified to Phosphoserine; by DAPK1. S306 carries the phosphoserine; by autocatalysis and DAPK1 modification. Phosphoserine; by DAPK1 occurs at positions 307, 313, and 321. Positions 390–448 (AQEEARAALLGAGGLKRRLCRLENRYDALAAQVAAEVQFVRDLVRALEQERLQAECGVR) are interaction with CDC5L. The segment at 418-448 (LAAQVAAEVQFVRDLVRALEQERLQAECGVR) is required for interaction with ATF4 but not with PAWR. The leucine-zipper stretch occupies residues 422–436 (VAAEVQFVRDLVRAL).

This sequence belongs to the protein kinase superfamily. CAMK Ser/Thr protein kinase family. DAP kinase subfamily. Homooligomer in its kinase-active form (homotrimers and homodimers are reported); monomeric in its kinase-inactive form. Homodimerization is required for activation segment autophosphorylation. Interacts with DAXX, ATF4, NLK, TCF7L2, UBE2D1, UBE2D2, UBE2D3 and CDC5L. Interacts with PAWR; also demonstrated in aorta smooth muscle cells indicative for the cytoskeletal targeting function of PAWR. Interacts with AR; enhanced by AATF. Interacts with LUZP1; the interaction is likely to occur throughout the cell cycle and reduces the LUZP1-mediated suppression of MYL9 phosphorylation. It depends on Mg(2+) as a cofactor. Ubiquitinated. Ubiquitination mediated by the UBE2D3 E3 ligase does not lead to proteasomal degradation, but influences promyelocytic leukemia protein nuclear bodies (PML-NBs) formation in the nucleus. Post-translationally, the phosphorylation status is critical for kinase activity, oligomerization and intracellular localization. Phosphorylation at Thr-180, Thr-225 and Thr-265 is essential for activity. The phosphorylated form is localized in the cytoplasm and nuclear translocation or retention is maximal when it is not phosphorylated. Phosphorylation increases the trimeric form, and its dephosphorylation favors a kinase-inactive monomeric form. In terms of tissue distribution, ubiquitously expressed in all tissue types examined. High levels in brain, heart, lung and spleen, lower expression in kidney, liver, skeletal muscle and testis. Isoform 2 is expressed in the smooth muscle.

The protein localises to the nucleus. The protein resides in the PML body. It is found in the cytoplasm. Its subcellular location is the cytoskeleton. It localises to the microtubule organizing center. The protein localises to the chromosome. The protein resides in the centromere. It is found in the spindle. Its subcellular location is the midbody. It carries out the reaction L-seryl-[protein] + ATP = O-phospho-L-seryl-[protein] + ADP + H(+). The enzyme catalyses L-threonyl-[protein] + ATP = O-phospho-L-threonyl-[protein] + ADP + H(+). With respect to regulation, a sequential activation is proposed: autophosphorylation at consensus sites is leading to dimerization of the catalytic domain and activation segment exchange (producing an active confirmation of both kinase modules in trans) followed by phosphorylation at Thr-180 in the activation segment and at other regulatory sites. Phosphorylation at Thr-180, Thr-225 and Thr-265 is essential for activity. Inhibited by pyridone 6 (K00225), a potent, ATP-competitive inhibitor. Phosphorylation at Thr-180, Thr-225 and Thr-265 is essential for activity. Its function is as follows. Serine/threonine kinase which is involved in the regulation of apoptosis, autophagy, transcription, translation and actin cytoskeleton reorganization. Regulates both type I (caspase-dependent) apoptotic and type II (caspase-independent) autophagic cell deaths signal, depending on the cellular setting. Involved in formation of promyelocytic leukemia protein nuclear body (PML-NB). Involved in apoptosis involving PAWR which mediates cytoplasmic relocation; in vitro phosphorylates PAWR. Regulates myosin phosphorylation in both smooth muscle and non-muscle cells. In smooth muscle, regulates myosin either directly by phosphorylating MYL12B and MYL9 or through inhibition of smooth muscle myosin phosphatase (SMPP1M) via phosphorylation of PPP1R12A; the inhibition of SMPP1M functions to enhance muscle responsiveness to Ca(2+) and promote a contractile state. Phosphorylates MYL12B in non-muscle cells leading to reorganization of actin cytoskeleton such as in regulation of cell polarity and cell migration. Positively regulates canonical Wnt/beta-catenin signaling through interaction with NLK and TCF7L2; disrupts the NLK-TCF7L2 complex thereby influencing the phosphorylation of TCF7L2 by NLK. Phosphorylates RPL13A on 'Ser-77' upon interferon-gamma activation which is causing RPL13A release from the ribosome, RPL13A association with the GAIT complex and its subsequent involvement in transcript-selective translation inhibition. Phosphorylates STAT3 and enhances its transcriptional activity. Enhances transcription from AR-responsive promoters in a hormone- and kinase-dependent manner. Phosphorylates histone H3 on 'Thr-11' at centromeres during mitosis. The chain is Death-associated protein kinase 3 (Dapk3) from Rattus norvegicus (Rat).